Consider the following 250-residue polypeptide: Ubiquinone/menaquinone biosynthesis C-methyltransferase UbiE (250 aa).

S-adenosyl-L-methionine contacts are provided by residues T73, D94, 122 to 123 (NA), and S139.

The protein belongs to the class I-like SAM-binding methyltransferase superfamily. MenG/UbiE family.

It carries out the reaction a 2-demethylmenaquinol + S-adenosyl-L-methionine = a menaquinol + S-adenosyl-L-homocysteine + H(+). The enzyme catalyses a 2-methoxy-6-(all-trans-polyprenyl)benzene-1,4-diol + S-adenosyl-L-methionine = a 5-methoxy-2-methyl-3-(all-trans-polyprenyl)benzene-1,4-diol + S-adenosyl-L-homocysteine + H(+). It functions in the pathway quinol/quinone metabolism; menaquinone biosynthesis; menaquinol from 1,4-dihydroxy-2-naphthoate: step 2/2. The protein operates within cofactor biosynthesis; ubiquinone biosynthesis. Functionally, methyltransferase required for the conversion of demethylmenaquinol (DMKH2) to menaquinol (MKH2) and the conversion of 2-polyprenyl-6-methoxy-1,4-benzoquinol (DDMQH2) to 2-polyprenyl-3-methyl-6-methoxy-1,4-benzoquinol (DMQH2). This is Ubiquinone/menaquinone biosynthesis C-methyltransferase UbiE from Francisella tularensis subsp. holarctica (strain FTNF002-00 / FTA).